The chain runs to 212 residues: Cytidylate kinase (212 aa).

An ATP-binding site is contributed by 9–17; sequence GPAAAGKGT.

It belongs to the cytidylate kinase family. Type 1 subfamily.

The protein localises to the cytoplasm. It catalyses the reaction CMP + ATP = CDP + ADP. It carries out the reaction dCMP + ATP = dCDP + ADP. The protein is Cytidylate kinase of Rhizobium meliloti (strain 1021) (Ensifer meliloti).